Reading from the N-terminus, the 556-residue chain is Arginine--tRNA ligase (556 aa).

Residues 132–142 carry the 'HIGH' region motif; it reads ANPTGDLHLGH.

Belongs to the class-I aminoacyl-tRNA synthetase family. Monomer.

Its subcellular location is the cytoplasm. The catalysed reaction is tRNA(Arg) + L-arginine + ATP = L-arginyl-tRNA(Arg) + AMP + diphosphate. This chain is Arginine--tRNA ligase, found in Bacillus cereus (strain ATCC 14579 / DSM 31 / CCUG 7414 / JCM 2152 / NBRC 15305 / NCIMB 9373 / NCTC 2599 / NRRL B-3711).